The chain runs to 235 residues: 1-(5-phosphoribosyl)-5-[(5-phosphoribosylamino)methylideneamino] imidazole-4-carboxamide isomerase (235 aa).

The active-site Proton acceptor is D8. D129 acts as the Proton donor in catalysis.

Belongs to the HisA/HisF family.

The protein localises to the cytoplasm. It carries out the reaction 1-(5-phospho-beta-D-ribosyl)-5-[(5-phospho-beta-D-ribosylamino)methylideneamino]imidazole-4-carboxamide = 5-[(5-phospho-1-deoxy-D-ribulos-1-ylimino)methylamino]-1-(5-phospho-beta-D-ribosyl)imidazole-4-carboxamide. It participates in amino-acid biosynthesis; L-histidine biosynthesis; L-histidine from 5-phospho-alpha-D-ribose 1-diphosphate: step 4/9. This chain is 1-(5-phosphoribosyl)-5-[(5-phosphoribosylamino)methylideneamino] imidazole-4-carboxamide isomerase, found in Thermoanaerobacter sp. (strain X514).